The sequence spans 353 residues: Protein XRP2 (353 aa).

Positions 1 to 37 (MGCFFSKKAKRKRNSEEEQPQQDGEEPKQYSWDKREK) are disordered. Glycine 2 carries the N-myristoyl glycine lipid modification. A lipid anchor (S-palmitoyl cysteine) is attached at cysteine 3. Positions 25–37 (EEPKQYSWDKREK) are enriched in basic and acidic residues. Residues 27–182 (PKQYSWDKRE…TWSNIHDFTP (156 aa)) enclose the C-CAP/cofactor C-like domain. GTP-binding positions include 101 to 102 (GS) and 118 to 121 (QQFR).

Belongs to the TBCC family. Post-translationally, myristoylated on Gly-2; which may be required for membrane targeting. Palmitoylated on Cys-3; which may be required for plasma membrane targeting.

It is found in the cell membrane. Its function is as follows. Acts as a GTPase-activating protein (GAP) for tubulin in concert with tubulin-specific chaperone C, but does not enhance tubulin heterodimerization. Acts as a GTPase-activating protein. May act as guanine nucleotide dissociation inhibitor towards ADP-ribosylation factor-like proteins. This chain is Protein XRP2 (rp2), found in Xenopus laevis (African clawed frog).